We begin with the raw amino-acid sequence, 409 residues long: Methylthioribose-1-phosphate isomerase (409 aa).

Asp277 serves as the catalytic Proton donor.

The protein belongs to the eIF-2B alpha/beta/delta subunits family. MtnA subfamily.

Its subcellular location is the cytoplasm. The protein localises to the nucleus. The enzyme catalyses 5-(methylsulfanyl)-alpha-D-ribose 1-phosphate = 5-(methylsulfanyl)-D-ribulose 1-phosphate. The protein operates within amino-acid biosynthesis; L-methionine biosynthesis via salvage pathway; L-methionine from S-methyl-5-thio-alpha-D-ribose 1-phosphate: step 1/6. Catalyzes the interconversion of methylthioribose-1-phosphate (MTR-1-P) into methylthioribulose-1-phosphate (MTRu-1-P). The polypeptide is Methylthioribose-1-phosphate isomerase (Scheffersomyces stipitis (strain ATCC 58785 / CBS 6054 / NBRC 10063 / NRRL Y-11545) (Yeast)).